The sequence spans 304 residues: Rhomboid-like protein 19 (304 aa).

6 helical membrane passes run 23 to 43 (LVVG…LALI), 58 to 78 (GYFE…LFMG), 93 to 113 (FIFV…IALY), 120 to 140 (VYLY…LVGI), 158 to 175 (WLPS…FFTL), and 179 to 198 (AYLP…LRYL). Residues 247–304 (SEDHDYSTSGAPLPGSDSAEASRRRERGARALEERLGTERLVPARNKDELQSDGLDNV) are disordered. Basic and acidic residues predominate over residues 266–284 (EASRRRERGARALEERLGT).

It belongs to the peptidase S54 family.

It is found in the membrane. Functionally, probable rhomboid-type serine protease that catalyzes intramembrane proteolysis. This chain is Rhomboid-like protein 19, found in Arabidopsis thaliana (Mouse-ear cress).